The chain runs to 88 residues: Small ribosomal subunit protein uS17 (88 aa).

This sequence belongs to the universal ribosomal protein uS17 family. Part of the 30S ribosomal subunit.

In terms of biological role, one of the primary rRNA binding proteins, it binds specifically to the 5'-end of 16S ribosomal RNA. In Synechococcus sp. (strain CC9311), this protein is Small ribosomal subunit protein uS17.